Reading from the N-terminus, the 397-residue chain is Succinyl-diaminopimelate desuccinylase (397 aa).

Histidine 73 is a Zn(2+) binding site. Aspartate 75 is a catalytic residue. A Zn(2+)-binding site is contributed by aspartate 106. Catalysis depends on glutamate 140, which acts as the Proton acceptor. 3 residues coordinate Zn(2+): glutamate 141, glutamate 169, and histidine 366.

It belongs to the peptidase M20A family. DapE subfamily. Homodimer. It depends on Zn(2+) as a cofactor. The cofactor is Co(2+).

It catalyses the reaction N-succinyl-(2S,6S)-2,6-diaminopimelate + H2O = (2S,6S)-2,6-diaminopimelate + succinate. The protein operates within amino-acid biosynthesis; L-lysine biosynthesis via DAP pathway; LL-2,6-diaminopimelate from (S)-tetrahydrodipicolinate (succinylase route): step 3/3. Its function is as follows. Catalyzes the hydrolysis of N-succinyl-L,L-diaminopimelic acid (SDAP), forming succinate and LL-2,6-diaminopimelate (DAP), an intermediate involved in the bacterial biosynthesis of lysine and meso-diaminopimelic acid, an essential component of bacterial cell walls. The protein is Succinyl-diaminopimelate desuccinylase of Rhizobium leguminosarum bv. trifolii (strain WSM2304).